Reading from the N-terminus, the 66-residue chain is Large ribosomal subunit protein bL35 (66 aa).

A disordered region spans residues 19 to 45 (SGKVVAAQSTKRHGMTKRSKRSLRTRR). Basic residues predominate over residues 28 to 45 (TKRHGMTKRSKRSLRTRR).

This sequence belongs to the bacterial ribosomal protein bL35 family.

The polypeptide is Large ribosomal subunit protein bL35 (Anaplasma phagocytophilum (strain HZ)).